A 218-amino-acid chain; its full sequence is Small ribosomal subunit protein uS5 (218 aa).

The 64-residue stretch at 66–129 (LKQELLNVNL…REAKLNLVPV (64 aa)) folds into the S5 DRBM domain.

This sequence belongs to the universal ribosomal protein uS5 family. Part of the 30S ribosomal subunit. Contacts protein S4.

Its function is as follows. With S4 and S12 plays an important role in translational accuracy. In Pyrobaculum aerophilum (strain ATCC 51768 / DSM 7523 / JCM 9630 / CIP 104966 / NBRC 100827 / IM2), this protein is Small ribosomal subunit protein uS5.